Reading from the N-terminus, the 464-residue chain is uncharacterized protein (464 aa).

A TRAM domain is found at M13–N71. Residues Q295, Y324, E345, and D393 each coordinate S-adenosyl-L-methionine. The active-site Nucleophile is the C420.

Belongs to the class I-like SAM-binding methyltransferase superfamily. RNA M5U methyltransferase family.

This is an uncharacterized protein from Fusobacterium nucleatum subsp. nucleatum (strain ATCC 25586 / DSM 15643 / BCRC 10681 / CIP 101130 / JCM 8532 / KCTC 2640 / LMG 13131 / VPI 4355).